The chain runs to 224 residues: Redox-sensing transcriptional repressor Rex (224 aa).

Residues 17–56 (RYHRYLEELLKNDVKRISSRELSEKMGVTASQIRQDLNNF) constitute a DNA-binding region (H-T-H motif). An NAD(+)-binding site is contributed by 91 to 96 (GAGNLG).

Belongs to the transcriptional regulatory Rex family. Homodimer.

It localises to the cytoplasm. Modulates transcription in response to changes in cellular NADH/NAD(+) redox state. In Thermoanaerobacter pseudethanolicus (strain ATCC 33223 / 39E) (Clostridium thermohydrosulfuricum), this protein is Redox-sensing transcriptional repressor Rex.